We begin with the raw amino-acid sequence, 926 residues long: MATAANTATAAGAAKDAPPAPTKSLSGIVKQVLSGDTVVIRATKGAPPPEKQITFSHVLAPKLARRPGAGGDETKDEPWAWESREFLRKKLIGVEVTFTFDKPANSNREYGFVWIGKDKETGENVVESIVREGLVSVRREGRPTAEQQTLIELEDQARAAGRGKWSPTASAADKVRNIKWSHENPAHLVDIYGGNPVKAIIEHVRDGSTVRAFLLPDFHYITLMISGIRCPGVKLDADGKPDLSVKVPFADEARYYVETRLLQRDVEIRLESVNNSNFIGTILYPKGNIAESLLREGLAKCVDWSMAVMKTGTDKLRAAERFAKEKRLRQWQDYQAKTPAFNSKEKDFSGTVVEVFNGDAINVRLSNGQVKKVFFSSIRPPRDQRAVVGTDGEEIVKAPPRGKNYRPLYEIPHMFDAREFLRKKLINKKVQCNLDYISPPRENFPEKYCYTVSIGGQNVAEAMVAKGLATCVRYRQDDDQRSSAYDQLIAAEQQAIKGLKGLHAKKDNATLRVNDLTVDHSRIKVQYLPSWQRALRTEAIVEFVASGSRLRIFVPKDSCLVTFLLAGISCPRSSRPALNGVPAQEGEPFGDEALTFTRERVLQRDVSVHIDTTDKAGSSVIGWLWTDSGANLSVALVEEGLAEVHFSAEKSEYYRQLKIAEDRAKAAKKNIWTNYVEEVPKEKTVTEEEKEDKVVAERKVNYENVIVTEITETLTFFAQSVESGSKLESLMSKLHADFQSNPPIAGSYTPKRGDLVAAQFTLDNQWYRAKVERVQGSNATVLYIDYGNKETLPTNRLAALPPAFSSEKPYATEYALALVALPTDNEDKEEALRAFSEDVLNHKVQLNVELKVTGSPNLATLRDPTTKVDFGKQLVAEGLVLAEQRGERKLKELVDQYKAAQEAARVAHLAIWKYGDITQDDAPEFR.

A compositionally biased stretch (low complexity) spans 1 to 17 (MATAANTATAAGAAKDA). The interval 1–24 (MATAANTATAAGAAKDAPPAPTKS) is disordered. 4 consecutive TNase-like domains span residues 23-167 (KSLS…KWSP), 195-333 (NPVK…QWQD), 346-505 (KDFS…LHAK), and 535-674 (LRTE…IWTN). A Tudor domain is found at 749-807 (TPKRGDLVAAQFTLDNQWYRAKVERVQGSNATVLYIDYGNKETLPTNRLAALPPAFSSE). Residues 760-788 (FTLDNQWYRAKVERVQGSNATVLYIDYGN) form an involved in dimethylarginine binding region.

Associates with the RNA-induced silencing complex (RISC). Interacts with the RISC components AGO2, Fmr1 and vig. Interacts with piwi. As to expression, expressed in adult ovaries and testis (at protein level).

Its subcellular location is the cytoplasm. It is found in the nucleus. It carries out the reaction Endonucleolytic cleavage to nucleoside 3'-phosphates and 3'-phosphooligonucleotide end-products.. Functionally, endonuclease which shows activity towards both DNA and RNA substrates. Has a role in translation regulation throught its association with the with the RNA-induced silencing complex (RISC). Plays a role in spermatogenesis probably by negatively regulating piwi expression in the germline. Together with piwi, might be involved in transposon repression in the germline. In Drosophila melanogaster (Fruit fly), this protein is Staphylococcal nuclease domain-containing protein 1.